Here is a 330-residue protein sequence, read N- to C-terminus: tRNA N6-adenosine threonylcarbamoyltransferase (330 aa).

Fe cation contacts are provided by His110 and His114. Residues 133 to 137 (MVSGG), Asp166, Gly179, Asp183, and Asn271 contribute to the substrate site. Asp299 is a binding site for Fe cation.

It belongs to the KAE1 / TsaD family. Requires Fe(2+) as cofactor.

It localises to the cytoplasm. It carries out the reaction L-threonylcarbamoyladenylate + adenosine(37) in tRNA = N(6)-L-threonylcarbamoyladenosine(37) in tRNA + AMP + H(+). Its function is as follows. Required for the formation of a threonylcarbamoyl group on adenosine at position 37 (t(6)A37) in tRNAs that read codons beginning with adenine. Is involved in the transfer of the threonylcarbamoyl moiety of threonylcarbamoyl-AMP (TC-AMP) to the N6 group of A37, together with TsaE and TsaB. TsaD likely plays a direct catalytic role in this reaction. This chain is tRNA N6-adenosine threonylcarbamoyltransferase, found in Thermosipho africanus (strain TCF52B).